The chain runs to 443 residues: 26S proteasome regulatory subunit 4 homolog B (443 aa).

2 disordered regions span residues 1–55 and 87–108; these read MGQG…LPTV and RLKP…LRGT. Composition is skewed to basic and acidic residues over residues 12–28 and 87–106; these read QGDR…KKFE and RLKP…DDLR. An ATP-binding site is contributed by 229-236; the sequence is GEPGTGKT. Glycyl lysine isopeptide (Lys-Gly) (interchain with G-Cter in ubiquitin) cross-links involve residues K296 and K433.

It belongs to the AAA ATPase family. In terms of assembly, component of the 19S regulatory particle (RP/PA700) base subcomplex of the 26S proteasome. The 26S proteasome is composed of a core protease (CP), known as the 20S proteasome, capped at one or both ends by the 19S regulatory particle (RP/PA700). The RP/PA700 complex is composed of at least 17 different subunits in two subcomplexes, the base and the lid, which form the portions proximal and distal to the 20S proteolytic core, respectively. Preferentially expressed in the root and shoot apical meristem.

The protein localises to the cytoplasm. The protein resides in the nucleus. Its function is as follows. The 26S protease is involved in the ATP-dependent degradation of ubiquitinated proteins. The regulatory (or ATPase) complex confers ATP dependency and substrate specificity to the 26S complex. Acts redundantly with RPT2A in the regulation of gametogenesis. With RPT2A plays a critical role in 26S proteasome assembly. The chain is 26S proteasome regulatory subunit 4 homolog B from Arabidopsis thaliana (Mouse-ear cress).